The following is a 356-amino-acid chain: Phosphate acyltransferase (356 aa).

The protein belongs to the PlsX family. As to quaternary structure, homodimer. Probably interacts with PlsY.

The protein localises to the cytoplasm. The catalysed reaction is a fatty acyl-[ACP] + phosphate = an acyl phosphate + holo-[ACP]. Its pathway is lipid metabolism; phospholipid metabolism. In terms of biological role, catalyzes the reversible formation of acyl-phosphate (acyl-PO(4)) from acyl-[acyl-carrier-protein] (acyl-ACP). This enzyme utilizes acyl-ACP as fatty acyl donor, but not acyl-CoA. The protein is Phosphate acyltransferase of Shigella flexneri serotype 5b (strain 8401).